Here is a 347-residue protein sequence, read N- to C-terminus: Selenide, water dikinase (347 aa).

Residue cysteine 16 is part of the active site. ATP-binding positions include lysine 19 and 47 to 49; that span reads TRD. Residue aspartate 50 coordinates Mg(2+). Residues aspartate 67, aspartate 90, and 138-140 contribute to the ATP site; that span reads GHS. Aspartate 90 is a binding site for Mg(2+). Aspartate 226 contributes to the Mg(2+) binding site.

The protein belongs to the selenophosphate synthase 1 family. Class I subfamily. As to quaternary structure, homodimer. Mg(2+) is required as a cofactor.

The enzyme catalyses hydrogenselenide + ATP + H2O = selenophosphate + AMP + phosphate + 2 H(+). In terms of biological role, synthesizes selenophosphate from selenide and ATP. This Photorhabdus laumondii subsp. laumondii (strain DSM 15139 / CIP 105565 / TT01) (Photorhabdus luminescens subsp. laumondii) protein is Selenide, water dikinase.